Consider the following 567-residue polypeptide: Mitogen-activated protein kinase 16 (567 aa).

The 292-residue stretch at 25–316 (YRIEEVIGKG…AEEALADVYF (292 aa)) folds into the Protein kinase domain. Residues 31 to 39 (IGKGSYGVV) and K54 contribute to the ATP site. D151 (proton acceptor) is an active-site residue. A Phosphothreonine modification is found at T187. The short motif at 187 to 189 (TDY) is the TXY element. Y189 carries the phosphotyrosine modification. At T192 the chain carries Phosphothreonine. 2 disordered regions span residues 428-455 (AQQS…ADRN) and 512-567 (PAAA…SRWY). Positions 443–453 (SIRDERPRGAD) are enriched in basic and acidic residues. The span at 545 to 567 (KPNTQYIPQKVSAAQDTAMSRWY) shows a compositional bias: polar residues.

Belongs to the protein kinase superfamily. CMGC Ser/Thr protein kinase family. MAP kinase subfamily. Post-translationally, dually phosphorylated on Thr-187 and Tyr-189, which activates the enzyme.

The catalysed reaction is L-seryl-[protein] + ATP = O-phospho-L-seryl-[protein] + ADP + H(+). It catalyses the reaction L-threonyl-[protein] + ATP = O-phospho-L-threonyl-[protein] + ADP + H(+). Activated by threonine and tyrosine phosphorylation. The polypeptide is Mitogen-activated protein kinase 16 (MPK16) (Arabidopsis thaliana (Mouse-ear cress)).